The chain runs to 202 residues: MSYLGVGVSPGNVPVYHGTNLKVVDRRVRLAELVLRCVICGLGILAAVLVGTDTQVKVIFTIQKKAKFTDMKALVFLVIANGIAAAYSLIQGLRCVVSMVRGSVLFSKPLAWAIFSGDQVIAYLTLAAVAAAAQSSVFGEFGQPELQWMKICNMYGKFCNQVGEGIVSAVGVSLSMVILSGISAFSLFRLYGGNKGTSGGRW.

Residues 1-29 (MSYLGVGVSPGNVPVYHGTNLKVVDRRVR) lie on the Cytoplasmic side of the membrane. Residues 30–50 (LAELVLRCVICGLGILAAVLV) traverse the membrane as a helical segment. Topologically, residues 51–72 (GTDTQVKVIFTIQKKAKFTDMK) are extracellular. A helical membrane pass occupies residues 73–93 (ALVFLVIANGIAAAYSLIQGL). Residues 94–109 (RCVVSMVRGSVLFSKP) lie on the Cytoplasmic side of the membrane. Residues 110–130 (LAWAIFSGDQVIAYLTLAAVA) traverse the membrane as a helical segment. At 131 to 164 (AAAQSSVFGEFGQPELQWMKICNMYGKFCNQVGE) the chain is on the extracellular side. A helical transmembrane segment spans residues 165-185 (GIVSAVGVSLSMVILSGISAF). Topologically, residues 186 to 202 (SLFRLYGGNKGTSGGRW) are cytoplasmic.

This sequence belongs to the Casparian strip membrane proteins (CASP) family. Homodimer and heterodimers.

It localises to the cell membrane. The protein is CASP-like protein 2B1 of Vitis vinifera (Grape).